We begin with the raw amino-acid sequence, 546 residues long: Chaperonin GroEL (546 aa).

ATP is bound by residues 30-33 (TLGP), 87-91 (DGTTT), Gly-414, 477-479 (NAL), and Asp-493.

Belongs to the chaperonin (HSP60) family. As to quaternary structure, forms a cylinder of 14 subunits composed of two heptameric rings stacked back-to-back. Interacts with the co-chaperonin GroES.

It is found in the cytoplasm. It carries out the reaction ATP + H2O + a folded polypeptide = ADP + phosphate + an unfolded polypeptide.. Functionally, together with its co-chaperonin GroES, plays an essential role in assisting protein folding. The GroEL-GroES system forms a nano-cage that allows encapsulation of the non-native substrate proteins and provides a physical environment optimized to promote and accelerate protein folding. In Syntrophomonas wolfei subsp. wolfei (strain DSM 2245B / Goettingen), this protein is Chaperonin GroEL.